Reading from the N-terminus, the 461-residue chain is Argininosuccinate lyase (461 aa).

The protein belongs to the lyase 1 family. Argininosuccinate lyase subfamily.

The protein resides in the cytoplasm. The catalysed reaction is 2-(N(omega)-L-arginino)succinate = fumarate + L-arginine. It participates in amino-acid biosynthesis; L-arginine biosynthesis; L-arginine from L-ornithine and carbamoyl phosphate: step 3/3. The chain is Argininosuccinate lyase from Symbiobacterium thermophilum (strain DSM 24528 / JCM 14929 / IAM 14863 / T).